A 90-amino-acid polypeptide reads, in one-letter code: MALAREKRAEFSAQKLEPIFEKYPSVKVRWYDVEAFSTKASDIAVFETTSLQDYYFVIDAIRDSEFCTVPYFEFVEIIPAIEDGYVEYES.

It belongs to the darcynin family.

The chain is Darcynin 1 from Acinetobacter baumannii (strain ATCC 17978 / DSM 105126 / CIP 53.77 / LMG 1025 / NCDC KC755 / 5377).